Here is a 248-residue protein sequence, read N- to C-terminus: MPEVSLYNYTMSICSMKTRLAMEEFGVDYDDKQVDIGFALENFEPDYVRLNEKAVVPTLVVGDRVVTNSYNIVLEAAKLGKVGIPADPVENKAALDWFQKGDQVNFQVITYGHKGVPRGDELLIARRERAKEYAEKYPELRSIYQAAHDRIVEHGNCAYDADTVAQAEVDLQKRLDELDAHLADKPFIAGSNYSIADIMWTVLLARIEMLNMTAWISERPNLLAYYQRMKARRSFETARVMPNWKGGI.

The GST N-terminal domain occupies 2 to 84 (PEVSLYNYTM…EAAKLGKVGI (83 aa)). One can recognise a GST C-terminal domain in the interval 133–248 (YAEKYPELRS…RVMPNWKGGI (116 aa)).

Belongs to the GST superfamily. Homodimer.

It carries out the reaction 2,6-dichlorohydroquinone + glutathione disulfide + chloride + H(+) = 2,3,6-trichlorohydroquinone + 2 glutathione. The enzyme catalyses 2,3,6-trichlorohydroquinone + glutathione disulfide + chloride = 2,3,5,6-tetrachlorohydroquinone + 2 glutathione. It functions in the pathway xenobiotic degradation; pentachlorophenol degradation. Sequential reduction of tetrachloro-p-hydroquinone to monochlorophenol, using glutathione as the reducing agent. The chain is Tetrachloro-P-hydroquinone reductive dehalogenase (pcpC) from Sphingobium chlorophenolicum.